Consider the following 327-residue polypeptide: Phenylalanine--tRNA ligase alpha subunit (327 aa).

Glu-252 serves as a coordination point for Mg(2+).

Belongs to the class-II aminoacyl-tRNA synthetase family. Phe-tRNA synthetase alpha subunit type 1 subfamily. In terms of assembly, tetramer of two alpha and two beta subunits. Requires Mg(2+) as cofactor.

The protein localises to the cytoplasm. The enzyme catalyses tRNA(Phe) + L-phenylalanine + ATP = L-phenylalanyl-tRNA(Phe) + AMP + diphosphate + H(+). This chain is Phenylalanine--tRNA ligase alpha subunit, found in Shewanella amazonensis (strain ATCC BAA-1098 / SB2B).